Reading from the N-terminus, the 366-residue chain is Chorismate synthase (366 aa).

NADP(+) is bound by residues arginine 48 and arginine 54. Residues 125–127 (RSS), 238–239 (NA), glycine 278, 293–297 (KPTSS), and arginine 319 each bind FMN.

It belongs to the chorismate synthase family. As to quaternary structure, homotetramer. FMNH2 serves as cofactor.

It carries out the reaction 5-O-(1-carboxyvinyl)-3-phosphoshikimate = chorismate + phosphate. It participates in metabolic intermediate biosynthesis; chorismate biosynthesis; chorismate from D-erythrose 4-phosphate and phosphoenolpyruvate: step 7/7. Catalyzes the anti-1,4-elimination of the C-3 phosphate and the C-6 proR hydrogen from 5-enolpyruvylshikimate-3-phosphate (EPSP) to yield chorismate, which is the branch point compound that serves as the starting substrate for the three terminal pathways of aromatic amino acid biosynthesis. This reaction introduces a second double bond into the aromatic ring system. In Neisseria gonorrhoeae (strain NCCP11945), this protein is Chorismate synthase.